The following is a 197-amino-acid chain: NADH-quinone oxidoreductase subunit C (197 aa).

The protein belongs to the complex I 30 kDa subunit family. In terms of assembly, NDH-1 is composed of 14 different subunits. Subunits NuoB, C, D, E, F, and G constitute the peripheral sector of the complex.

Its subcellular location is the cell inner membrane. The enzyme catalyses a quinone + NADH + 5 H(+)(in) = a quinol + NAD(+) + 4 H(+)(out). Its function is as follows. NDH-1 shuttles electrons from NADH, via FMN and iron-sulfur (Fe-S) centers, to quinones in the respiratory chain. The immediate electron acceptor for the enzyme in this species is believed to be ubiquinone. Couples the redox reaction to proton translocation (for every two electrons transferred, four hydrogen ions are translocated across the cytoplasmic membrane), and thus conserves the redox energy in a proton gradient. In Rickettsia typhi (strain ATCC VR-144 / Wilmington), this protein is NADH-quinone oxidoreductase subunit C.